The primary structure comprises 101 residues: Ascorbate-specific PTS system EIIB component (101 aa).

In terms of domain architecture, PTS EIIB type-2 spans 3–96; the sequence is VRILAVCGNG…KLLKVIKEHF (94 aa). The Phosphocysteine intermediate role is filled by Cys9. A Phosphocysteine modification is found at Cys9.

The protein localises to the cytoplasm. It catalyses the reaction N(pros)-phospho-L-histidyl-[protein] + L-ascorbate(out) = L-ascorbate 6-phosphate(in) + L-histidyl-[protein]. The phosphoenolpyruvate-dependent sugar phosphotransferase system (sugar PTS), a major carbohydrate active transport system, catalyzes the phosphorylation of incoming sugar substrates concomitantly with their translocation across the cell membrane. The enzyme II UlaABC PTS system is involved in ascorbate transport. The chain is Ascorbate-specific PTS system EIIB component (ulaB) from Shigella dysenteriae serotype 1 (strain Sd197).